Consider the following 584-residue polypeptide: uncharacterized protein (584 aa).

Over residues 353–375 (NSEGQTNAETSLNGKGTVGNQWA) the composition is skewed to polar residues. 3 disordered regions span residues 353-379 (NSEGQTNAETSLNGKGTVGNQWASPPE), 400-426 (LESKFNGTGGGQTDSEKEQIMESVSSH), and 463-565 (SVDS…CNSG). Residues 502-511 (KANSPASSRL) are compositionally biased toward polar residues. The span at 516-535 (DSSHLSKHVNFDKNPDHSEA) shows a compositional bias: basic and acidic residues.

This is an uncharacterized protein from Mus musculus (Mouse).